Reading from the N-terminus, the 385-residue chain is Deoxyguanosinetriphosphate triphosphohydrolase-like protein (385 aa).

Residues Arg75 to Thr197 form the HD domain.

The protein belongs to the dGTPase family. Type 2 subfamily.

This Deinococcus geothermalis (strain DSM 11300 / CIP 105573 / AG-3a) protein is Deoxyguanosinetriphosphate triphosphohydrolase-like protein.